A 752-amino-acid chain; its full sequence is MQQNVKEKHAGKSDTSVSSLECEIDYHIEGSDGIPVVEPKISEFVDMESFIRRVERLGKKYGAIKVVRPSSVLNPWNEDTMKPSDVKMDLWLERMVRRKGEYFEIQSDIDHGSAGPKKPTDMNVDDRFPSNAGSSNDFENNVAKAIAYYWRSLTHDSLWYGYTNRPSIPFYFIPSISAAQKDRVHLRSNTLINTWPNVGHLFAGKWKTTLPWRVESPELHAVQVHLGGSSLQWYVIPSAHSESFKKLAGKLAQDEHWRCSDFLLHQNILFPPSTLVQNGIVTYSTVLKQDELLITFPGTHHSAFCLGDAVLRRFVFRSPRSASNYEFSNLRRLMVSESLYSSKSLWPHSHKPQRACSQKFLDEFYLHDLPESNIHDSGNFHPIHSSVDNNSFSQRDFDSPNSINPPSPLMSNHESASTEHFNSTTTTEKELSSLHVGEERKNRSLPLSLIWNSKAREEYIKKQKEENGDNIEFSHFDPLYTRPSSHPLHPPPILGLPVPAQFARGELFLGRILEDRVSEHMLLLECEKSDVVEVPYECILTSSSAAGRRESSYYNPALKAPNIVYDDGVPINWNEYSELPSLDRFVLPKLLPGKPIEFTPPISVEPTSIKTIAAEESSEPTSSVDVAPTPVEDVNVNLESISNTNESVVDLSDPLVSKNGFEDVERSSVADLEEDVLETRSSIFETSDIDDRLTVIDRSQSVVPSESEFSIAGANLTRRNAVDFSVSLDTYELYVSDEVENVDDFSLFPSLE.

The region spanning 34 to 75 (IPVVEPKISEFVDMESFIRRVERLGKKYGAIKVVRPSSVLNP) is the JmjN domain. In terms of domain architecture, JmjC spans 162–333 (YTNRPSIPFY…NYEFSNLRRL (172 aa)). 2 stretches are compositionally biased toward polar residues: residues 391 to 402 (SFSQRDFDSPNS) and 409 to 423 (LMSNHESASTEHFNS). A disordered region spans residues 391–438 (SFSQRDFDSPNSINPPSPLMSNHESASTEHFNSTTTTEKELSSLHVGE). A compositionally biased stretch (basic and acidic residues) spans 427 to 438 (TEKELSSLHVGE).

In terms of assembly, component of the Lid2 complex composed of ash2, jmj3, lid2, sdc1 and snt2.

Its subcellular location is the nucleus. The sequence is that of Lid2 complex component jmj3 from Schizosaccharomyces pombe (strain 972 / ATCC 24843) (Fission yeast).